Consider the following 421-residue polypeptide: Medium-chain specific acyl-CoA dehydrogenase, mitochondrial (421 aa).

A mitochondrion-targeting transit peptide spans 1 to 25 (MAAAFGRCCRVLRSISRFHWRSQHT). Lys69 bears the N6-acetyllysine; alternate mark. The residue at position 69 (Lys69) is an N6-succinyllysine; alternate. Position 158-167 (158-167 (YCVTEPGAGS)) interacts with FAD. Residue Ser167 participates in octanoyl-CoA binding. Lys179 is subject to N6-succinyllysine. Position 191–193 (191–193 (WIT)) interacts with FAD. Lys212, Lys217, Lys259, and Lys271 each carry N6-acetyllysine; alternate. An N6-succinyllysine; alternate mark is found at Lys212, Lys217, Lys259, and Lys271. Residue Asp278 coordinates octanoyl-CoA. An N6-acetyllysine modification is found at Lys279. Residue Arg281 coordinates octanoyl-CoA. At Lys301 the chain carries N6-acetyllysine. FAD-binding positions include 306-308 (RKT) and 316-317 (HQ). Octanoyl-CoA is bound by residues Arg349 and Thr351. Thr351 bears the Phosphothreonine mark. 374-378 (QIFGG) contacts FAD. Glu401 is an octanoyl-CoA binding site. Glu401 (proton acceptor) is an active-site residue. Position 402–405 (402–405 (GTSQ)) interacts with FAD.

This sequence belongs to the acyl-CoA dehydrogenase family. As to quaternary structure, homotetramer. Interacts with the heterodimeric electron transfer flavoprotein ETF. Requires FAD as cofactor. In terms of processing, acetylated. Could occur at proximity of the cofactor-binding sites and reduce the catalytic activity. Could be deacetylated by SIRT3.

The protein resides in the mitochondrion matrix. It carries out the reaction a medium-chain 2,3-saturated fatty acyl-CoA + oxidized [electron-transfer flavoprotein] + H(+) = a medium-chain (2E)-enoyl-CoA + reduced [electron-transfer flavoprotein]. The enzyme catalyses pentanoyl-CoA + oxidized [electron-transfer flavoprotein] + H(+) = (2E)-pentenoyl-CoA + reduced [electron-transfer flavoprotein]. It catalyses the reaction hexanoyl-CoA + oxidized [electron-transfer flavoprotein] + H(+) = (2E)-hexenoyl-CoA + reduced [electron-transfer flavoprotein]. The catalysed reaction is octanoyl-CoA + oxidized [electron-transfer flavoprotein] + H(+) = (2E)-octenoyl-CoA + reduced [electron-transfer flavoprotein]. It carries out the reaction decanoyl-CoA + oxidized [electron-transfer flavoprotein] + H(+) = (2E)-decenoyl-CoA + reduced [electron-transfer flavoprotein]. The enzyme catalyses dodecanoyl-CoA + oxidized [electron-transfer flavoprotein] + H(+) = (2E)-dodecenoyl-CoA + reduced [electron-transfer flavoprotein]. It catalyses the reaction tetradecanoyl-CoA + oxidized [electron-transfer flavoprotein] + H(+) = (2E)-tetradecenoyl-CoA + reduced [electron-transfer flavoprotein]. The catalysed reaction is oxidized [electron-transfer flavoprotein] + hexadecanoyl-CoA + H(+) = (2E)-hexadecenoyl-CoA + reduced [electron-transfer flavoprotein]. Its pathway is lipid metabolism; mitochondrial fatty acid beta-oxidation. Medium-chain specific acyl-CoA dehydrogenase is one of the acyl-CoA dehydrogenases that catalyze the first step of mitochondrial fatty acid beta-oxidation, an aerobic process breaking down fatty acids into acetyl-CoA and allowing the production of energy from fats. The first step of fatty acid beta-oxidation consists in the removal of one hydrogen from C-2 and C-3 of the straight-chain fatty acyl-CoA thioester, resulting in the formation of trans-2-enoyl-CoA. Electron transfer flavoprotein (ETF) is the electron acceptor that transfers electrons to the main mitochondrial respiratory chain via ETF-ubiquinone oxidoreductase (ETF dehydrogenase). Among the different mitochondrial acyl-CoA dehydrogenases, medium-chain specific acyl-CoA dehydrogenase acts specifically on acyl-CoAs with saturated 6 to 12 carbons long primary chains. In Macaca fascicularis (Crab-eating macaque), this protein is Medium-chain specific acyl-CoA dehydrogenase, mitochondrial.